Reading from the N-terminus, the 225-residue chain is ATP-dependent dethiobiotin synthetase BioD 1 (225 aa).

13 to 18 is an ATP binding site; it reads EVGKTV. Residue Thr-17 participates in Mg(2+) binding. Lys-38 is an active-site residue. Ser-42 serves as a coordination point for substrate. ATP-binding positions include Asp-55, 116 to 119, 176 to 177, 205 to 207, and Glu-212; these read EGAG, ND, and PWL. Residues Asp-55 and Glu-116 each coordinate Mg(2+).

Belongs to the dethiobiotin synthetase family. As to quaternary structure, homodimer. Requires Mg(2+) as cofactor.

The protein localises to the cytoplasm. It carries out the reaction (7R,8S)-7,8-diammoniononanoate + CO2 + ATP = (4R,5S)-dethiobiotin + ADP + phosphate + 3 H(+). Its pathway is cofactor biosynthesis; biotin biosynthesis; biotin from 7,8-diaminononanoate: step 1/2. Catalyzes a mechanistically unusual reaction, the ATP-dependent insertion of CO2 between the N7 and N8 nitrogen atoms of 7,8-diaminopelargonic acid (DAPA, also called 7,8-diammoniononanoate) to form a ureido ring. This is ATP-dependent dethiobiotin synthetase BioD 1 from Escherichia coli O157:H7.